The following is a 362-amino-acid chain: Protein indeterminate-domain 16 (362 aa).

Positions 1 to 22 (MELTQPIRENGDPQGHQLTDPD) are disordered. 2 C2H2-type zinc fingers span residues 39–61 (YVCEICNQGFQRDQNLQMHRRRH) and 82–112 (YVCPEPTCLHHDPCHALGDLVGIKKHFRRKH). A CCHC-type 1; atypical zinc finger spans residues 118-142 (WVCERCSKGYAVQSDYKAHLKTCGS). Residues cysteine 120, cysteine 123, histidine 136, cysteine 140, cysteine 147, cysteine 149, histidine 162, and cysteine 166 each contribute to the Zn(2+) site. Residues 145 to 168 (HSCDCGRVFSRVESFIEHQDTCTI) form a CCHC-type 2; atypical zinc finger. The SHR-binding stretch occupies residues 155–167 (RVESFIEHQDTCT). The segment at 247–278 (SAQARHNEKRETSLTKERANEEARKAEETRQE) is disordered. Basic and acidic residues predominate over residues 251-278 (RHNEKRETSLTKERANEEARKAEETRQE). Positions 252–319 (HNEKRETSLT…VREEAIKRIN (68 aa)) form a coiled coil.

Highly expressed in leaves, hypocotyls, roots, vasculature of cotyledons, floral organs and in the endodermis and vasculaturenof inflorescence stems.

The protein localises to the nucleus. In terms of biological role, transcription factor regulating lateral organ morphogenesis and gravitropic responses. Has a redundant role with IDD14 in directing leaf and floral organ morphogenesis. Acts cooperatively with IDD15 to control silique and branche orientation. Involved in the establishment of auxin gradients through the regulation of auxin biosynthesis and transport. This chain is Protein indeterminate-domain 16, found in Arabidopsis thaliana (Mouse-ear cress).